The following is a 341-amino-acid chain: Methionine import ATP-binding protein MetN (341 aa).

The 239-residue stretch at 9–247 folds into the ABC transporter domain; that stretch reads ISVQKVNKEI…PRSSITEELF (239 aa). Residue 41-48 coordinates ATP; it reads GHSGSGKS.

It belongs to the ABC transporter superfamily. Methionine importer (TC 3.A.1.24) family. In terms of assembly, the complex is composed of two ATP-binding proteins (MetN), two transmembrane proteins (MetI) and a solute-binding protein (MetQ).

It localises to the cell inner membrane. The enzyme catalyses L-methionine(out) + ATP + H2O = L-methionine(in) + ADP + phosphate + H(+). It catalyses the reaction D-methionine(out) + ATP + H2O = D-methionine(in) + ADP + phosphate + H(+). In terms of biological role, part of the ABC transporter complex MetNIQ involved in methionine import. Responsible for energy coupling to the transport system. The polypeptide is Methionine import ATP-binding protein MetN (Chlamydia caviae (strain ATCC VR-813 / DSM 19441 / 03DC25 / GPIC) (Chlamydophila caviae)).